A 407-amino-acid chain; its full sequence is Heparan-sulfate 6-O-sulfotransferase 1-B (407 aa).

The Cytoplasmic portion of the chain corresponds to 8–14 (MVERTSK). The chain crosses the membrane as a helical; Signal-anchor for type II membrane protein span at residues 15-35 (FLLIVVGSVFFMLILYQYVAP). Over 36–407 (GVINFGSPHG…DYMNHIINGW (372 aa)) the chain is Lumenal. 92–100 (HIQKTGGTT) lines the 3'-phosphoadenylyl sulfate pocket. Substrate contacts are provided by residues 122 to 123 (KK), Arg139, Trp144, and His149. The Proton acceptor role is filled by His149. 2 residues coordinate 3'-phosphoadenylyl sulfate: Arg183 and Ser191. Substrate contacts are provided by His195 and Trp202. Residue Asn262 is glycosylated (N-linked (GlcNAc...) asparagine). Residue 315–317 (MQY) coordinates 3'-phosphoadenylyl sulfate. An N-linked (GlcNAc...) asparagine glycan is attached at Asn318. 3'-phosphoadenylyl sulfate is bound at residue 321 to 322 (RA). Asn329 carries an N-linked (GlcNAc...) asparagine glycan.

It belongs to the sulfotransferase 6 family. As to expression, during early somitogenesis, first expressed in floor plate and somites. During mid-somitogenesis, expressed strongly in somites and more weakly in eye and hindbrain. During late somitogenesis, expressed in eye, hindbrain and posterior somites. At 24 hours post-fertilization (hpf), expressed in lens, forebrain, hindbrain, otic vesicle, anterior spinal cord neurons and posterior somites. At 36 hpf, expressed in the retinal ciliary marginal zone, brain, pancreas and weakly in pectoral fin. At 48 hpf, expressed in the retinal ciliary marginal zone, retinal ganglion cells, rhombomeres, otic vesicle and weakly in pectoral fin.

The protein localises to the membrane. The enzyme catalyses alpha-D-glucosaminyl-[heparan sulfate](n) + 3'-phosphoadenylyl sulfate = 6-sulfo-alpha-D-glucosaminyl-[heparan sulfate](n) + adenosine 3',5'-bisphosphate + H(+). 6-O-sulfation enzyme which catalyzes the transfer of sulfate from 3'-phosphoadenosine 5'-phosphosulfate (PAPS) to position 6 of the N-sulfoglucosamine residue (GlcNS) of heparan sulfate. This is Heparan-sulfate 6-O-sulfotransferase 1-B from Danio rerio (Zebrafish).